Here is a 370-residue protein sequence, read N- to C-terminus: Forkhead box protein I1-A (370 aa).

Disordered regions lie at residues 1–28 (MNPV…AQEA), 212–269 (DNGN…CPSP), and 342–370 (SSLP…QGRY). A DNA-binding region (fork-head) is located at residues 127–221 (RPPYSYSALI…DNGNFRRKRK (95 aa)). Positions 232-245 (AKREEDHVSPKGKE) are enriched in basic and acidic residues. Residues 349-370 (QKQPPYLQQLHPQQSPLYQGRY) are compositionally biased toward low complexity.

Initially localized to the animal hemisphere (the presumptive ectoderm) of early-mid blastula embryos. Becomes restricted to head placodes, excluding the otic placodes, by the tailbud stages.

The protein localises to the nucleus. Functionally, transcription factor. Essential for ventral specification of the early cephalic (head) ectoderm during gastrulation, playing a role in the non-neural versus neural cell fate choice. Binds to DNA via the target sequence 5'-[AG]TAAA[CT]A-3', with 5'-ATAAACA-3' being the preferred binding site. The sequence is that of Forkhead box protein I1-A (foxi1-a) from Xenopus laevis (African clawed frog).